The primary structure comprises 654 residues: Pentatricopeptide repeat-containing protein At4g19191, mitochondrial (654 aa).

The transit peptide at 1 to 65 (MSLIHRRLYR…PFVAKACARL (65 aa)) directs the protein to the mitochondrion. PPR repeat units follow at residues 86–116 (DVFVGTATVDMFVKCNSVDYAAKVFERMPER), 117–151 (DATTWNAMLSGFCQSGHTDKAFSLFREMRLNEITP), 152–186 (DSVTVMTLIQSASFEKSLKLLEAMHAVGIRLGVDV), 187–217 (QVTVANTWISTYGKCGDLDSAKLVFEAIDRG), 220–254 (TVVSWNSMFKAYSVFGEAFDAFGLYCLMLREEFKP), 255–289 (DLSTFINLAASCQNPETLTQGRLIHSHAIHLGTDQ), 290–320 (DIEAINTFISMYSKSEDTCSARLLFDIMTSR), 321–355 (TCVSWTVMISGYAEKGDMDEALALFHAMIKSGEKP), 356–390 (DLVTLLSLISGCGKFGSLETGKWIDARADIYGCKR), 392–422 (NVMICNALIDMYSKCGSIHEARDIFDNTPEK), 423–457 (TVVTWTTMIAGYALNGIFLEALKLFSKMIDLDYKP), 458–488 (NHITFLAVLQACAHSGSLEKGWEYFHIMKQV), and 494–524 (GLDHYSCMVDLLGRKGKLEEALELIRNMSAK). Positions 529–604 (IWGALLNACK…YPGESVIQVN (76 aa)) are type E motif. Residues 605-635 (GKNHSFTVGEHGHVENEVIYFTLNGLSLFAK) form a type E(+) motif region.

This sequence belongs to the PPR family. PCMP-E subfamily.

Its subcellular location is the mitochondrion. This is Pentatricopeptide repeat-containing protein At4g19191, mitochondrial (PCMP-E1) from Arabidopsis thaliana (Mouse-ear cress).